We begin with the raw amino-acid sequence, 282 residues long: Protein-export membrane protein SecF (282 aa).

6 consecutive transmembrane segments (helical) span residues 9–29, 120–140, 149–169, 174–194, 214–234, and 236–256; these read IAIP…KGIP, EGFK…YLYF, IILS…LLGI, ATIA…ILLT, KTGL…LIVV, and LFIP…LALI.

This sequence belongs to the SecD/SecF family. SecF subfamily. As to quaternary structure, part of the protein translocation apparatus. Forms a complex with SecD.

The protein localises to the cell membrane. Its function is as follows. Involved in protein export. The chain is Protein-export membrane protein SecF from Methanocaldococcus jannaschii (strain ATCC 43067 / DSM 2661 / JAL-1 / JCM 10045 / NBRC 100440) (Methanococcus jannaschii).